The chain runs to 317 residues: Protein CbxX, chromosomal (317 aa).

A disordered region spans residues 1 to 21; sequence MSAPETTAPLQPPAAPAASLP. 85–92 is an ATP binding site; the sequence is GNPGTGKT.

Belongs to the CbxX/CfxQ family.

Its function is as follows. Seems to be necessary for the expression of RuBisCO. The protein is Protein CbxX, chromosomal (cbxXC) of Cupriavidus necator (strain ATCC 17699 / DSM 428 / KCTC 22496 / NCIMB 10442 / H16 / Stanier 337) (Ralstonia eutropha).